The following is a 462-amino-acid chain: uncharacterized protein (462 aa).

Residues 12-70 form the TRAM domain; the sequence is MLKKNDIIQVAISDLSHEGAGVAKHDGFVFFVDNALPEEVIDMRVLKVNKNSGFGKVEA. S-adenosyl-L-methionine-binding residues include glutamine 294, tyrosine 323, glutamate 344, and aspartate 392. Cysteine 419 acts as the Nucleophile in catalysis.

This sequence belongs to the class I-like SAM-binding methyltransferase superfamily. RNA M5U methyltransferase family.

This is an uncharacterized protein from Streptococcus pyogenes serotype M3 (strain ATCC BAA-595 / MGAS315).